A 372-amino-acid chain; its full sequence is Delta-type opioid receptor (372 aa).

At Met1 to Ala47 the chain is on the extracellular side. 2 N-linked (GlcNAc...) asparagine glycosylation sites follow: Asn18 and Asn33. A helical transmembrane segment spans residues Leu48–Val75. Residues Arg76–Asn85 are Cytoplasmic-facing. A helical transmembrane segment spans residues Ile86–Leu110. The Extracellular portion of the chain corresponds to Met111 to Lys122. Cysteines 121 and 198 form a disulfide. Residues Ala123–Val144 traverse the membrane as a helical segment. At Asp145–Ala163 the chain is on the cytoplasmic side. A helical membrane pass occupies residues Lys164–Met186. Residues Ala187–Ser206 lie on the Extracellular side of the membrane. Residues Trp207–Leu238 form a helical membrane-spanning segment. Residues Arg239 to Arg261 are Cytoplasmic-facing. The helical transmembrane segment at Met262–Trp284 threads the bilayer. The Extracellular portion of the chain corresponds to Thr285–Ala299. A helical transmembrane segment spans residues Leu300–Leu321. The Cytoplasmic segment spans residues Asp322 to Ala372. A lipid anchor (S-palmitoyl cysteine) is attached at Cys333. Residues Pro340 to Ala372 are disordered. Basic and acidic residues predominate over residues Arg347–Val357.

This sequence belongs to the G-protein coupled receptor 1 family. May form homooligomers. Forms a heterodimer with OPRM1. Interacts with GPRASP1. Interacts with RTP4; the interaction promotes cell surface localization of the OPRD1-OPRM1 heterodimer. Post-translationally, N-glycosylated. Ubiquitinated. A basal ubiquitination seems not to be related to degradation. Ubiquitination is increased upon formation of OPRM1:OPRD1 oligomers leading to proteasomal degradation; the ubiquitination is diminished by RTP4. Detected in oocytes (at protein level). Detected in brain cortex, hypothalamus, hippocampus and olfactory bulb. Detected in oocytes.

It localises to the cell membrane. G-protein coupled receptor that functions as a receptor for endogenous enkephalins and for a subset of other opioids. Ligand binding causes a conformation change that triggers signaling via guanine nucleotide-binding proteins (G proteins) and modulates the activity of down-stream effectors, such as adenylate cyclase. Signaling leads to the inhibition of adenylate cyclase activity. Inhibits neurotransmitter release by reducing calcium ion currents and increasing potassium ion conductance. Plays a role in the perception of pain and in opiate-mediated analgesia. Plays a role in developing analgesic tolerance to morphine. The chain is Delta-type opioid receptor (OPRD1) from Homo sapiens (Human).